The following is a 356-amino-acid chain: Tyrosine recombinase XerS (356 aa).

The region spanning 16–121 (LMPWYVLEYY…ALSSLYKYLT (106 aa)) is the Core-binding (CB) domain. The region spanning 169–354 (GFLTYIDQEH…VNDEQKNALD (186 aa)) is the Tyr recombinase domain. Active-site residues include R210, K234, H306, R309, and H332. Y341 (O-(3'-phospho-DNA)-tyrosine intermediate) is an active-site residue.

It belongs to the 'phage' integrase family. XerS subfamily.

It is found in the cytoplasm. FtsK is required for recombination. Its function is as follows. Site-specific tyrosine recombinase, which acts by catalyzing the cutting and rejoining of the recombining DNA molecules. Essential to convert dimers of the bacterial chromosome into monomers to permit their segregation at cell division. This chain is Tyrosine recombinase XerS, found in Streptococcus pneumoniae (strain P1031).